The primary structure comprises 1119 residues: Leucine-rich repeats and immunoglobulin-like domains protein 3 (1119 aa).

An N-terminal signal peptide occupies residues 1–24 (MSAPSLRARAAGLGLLLCAVLGRA). The LRRNT domain occupies 38 to 74 (PSGVAAERPCPTTCRCLGDLLDCSRKRLARLPEPLPS). LRR repeat units follow at residues 75–96 (WVARLDLSHNRLSFIKASSMSH), 99–120 (SLREVKLNNNELETIPNLGPVS), 122–142 (NITLLSLAGNRIVEILPEHLK), 146–167 (SLETLDLSSNNISELQTAFPAL), 168–189 (QLKYLYLNSNRVTSMEPGYFDN), 193–214 (TLLVLKLNRNRISAIPPKMFKL), 216–237 (QLQHLELNRNKIKNVDGLTFQG), 240–261 (ALKSLKMQRNGVTKLMDGAFWG), 264–285 (NMEILQLDHNNLTEITKGWLYG), 288–309 (MLQELHLSQNAINRISPDAWEF), 312–333 (KLSELDLTFNHLSRLDDSSFLG), 336–357 (LLNTLHIGNNRVSYIADCAFRG), 360–382 (SLKTLDLKNNEISWTIEDMNGAF), 387–408 (KLRRLILQGNRIRSITKKAFTG), and 411–432 (ALEHLDLSDNAIMSLQGNAFSQ). Residues Asn122 and Asn156 are each glycosylated (N-linked (GlcNAc...) asparagine). Residue Asn274 is glycosylated (N-linked (GlcNAc...) asparagine). Asn442, Asn469, and Asn515 each carry an N-linked (GlcNAc...) asparagine glycan. In terms of domain architecture, LRRCT spans 444 to 495 (SSLLCDCQLKWLPQWVAENNFQSFVNASCAHPQLLKGRSIFAVSPDGFVCDD). Ig-like C2-type domains follow at residues 499–598 (PQIT…AKLT), 603–692 (PSFT…ATLT), and 697–783 (PSFL…VRLS). Cystine bridges form between Cys520–Cys581 and Cys624–Cys676. 2 N-linked (GlcNAc...) asparagine glycosylation sites follow: Asn688 and Asn729. Cys718 and Cys767 form a disulfide bridge. A helical transmembrane segment spans residues 810 to 830 (VVIIAVVCCVVGTSLVWVVII). N-linked (GlcNAc...) asparagine glycosylation is found at Asn905, Asn987, Asn999, and Asn1016. Residues 1073–1093 (SSPDLDSGSEEDGKERTDFQE) are disordered. A compositionally biased stretch (basic and acidic residues) spans 1083–1093 (EDGKERTDFQE).

In terms of assembly, interacts with EGFR, ERBB2 and ERBB4 (in vitro). Widely expressed.

It localises to the cell membrane. The protein localises to the cytoplasmic vesicle membrane. In terms of biological role, may play a role in craniofacial and inner ear morphogenesis during embryonic development. May act within the otic vesicle epithelium to control formation of the lateral semicircular canal in the inner ear, possibly by restricting the expression of NTN1. This Homo sapiens (Human) protein is Leucine-rich repeats and immunoglobulin-like domains protein 3 (LRIG3).